A 435-amino-acid chain; its full sequence is Amino acid transporter AVT6C (435 aa).

Residues 1 to 24 (MTPQIKTHLLPKQEPSSSENHGSS) form a disordered region. 11 consecutive transmembrane segments (helical) span residues 28-48 (IVFN…PAAF), 53-73 (IVPA…SVGF), 100-120 (IAVQ…FSII), 148-168 (WNTR…PLVL), 181-201 (VSFL…ISAL), 219-239 (GSFW…TFHF), 260-280 (ISVI…YLLF), 307-327 (IVRL…NFSL), 354-374 (LALL…WYFF), 375-395 (QFMG…AIVL), and 408-428 (IVAA…ISTN).

This sequence belongs to the amino acid/polyamine transporter 2 family. Amino acid/auxin permease (AAAP) (TC 2.A.18.6) subfamily.

Its subcellular location is the membrane. The chain is Amino acid transporter AVT6C from Arabidopsis thaliana (Mouse-ear cress).